A 389-amino-acid chain; its full sequence is Na(+)/H(+) antiporter NhaA (389 aa).

11 helical membrane passes run 17-37 (ILLL…LAGF), 59-79 (LLLW…GLEV), 95-115 (SLPT…YLLF), 124-144 (AGWA…MALL), 154-174 (VFLL…IALF), 177-197 (SDLS…LVAL), 213-233 (LILW…GVII), 261-281 (FLIL…NMSL), 292-312 (IALG…FVAV), 328-348 (IAPV…IASL), and 363-383 (LGTL…LSKV).

It belongs to the NhaA Na(+)/H(+) (TC 2.A.33) antiporter family.

The protein resides in the cell inner membrane. The enzyme catalyses Na(+)(in) + 2 H(+)(out) = Na(+)(out) + 2 H(+)(in). Na(+)/H(+) antiporter that extrudes sodium in exchange for external protons. This Shewanella oneidensis (strain ATCC 700550 / JCM 31522 / CIP 106686 / LMG 19005 / NCIMB 14063 / MR-1) protein is Na(+)/H(+) antiporter NhaA.